A 430-amino-acid chain; its full sequence is Potassium channel subfamily K member 12 (430 aa).

Topologically, residues 1 to 38 (MSSRSPRPPPRRCRRRLPRPSCCCCCCRRSHLNEDTGR) are cytoplasmic. An ER retention/retrieval signal region spans residues 11–16 (RRCRRR). The chain crosses the membrane as a helical span at residues 39–59 (FVLLAALIGLYLVAGATVFSA). The N-linked (GlcNAc...) asparagine glycan is linked to Asn-78. The segment at residues 114–134 (WDFPGAFYFVGTVVSTIGFGM) is an intramembrane region (pore-forming). Thr-129, Ile-130, and Gly-131 together coordinate K(+). The segment at 129-134 (TIGFGM) is selectivity filter 1. A helical transmembrane segment spans residues 145 to 165 (FLIAYGLFGCAGTILFFNLFL). Over 166 to 212 (ERIISLLAFIMRACRERQLRRSGLLPATFRRGSALSEADSLAGWKPS) the chain is Cytoplasmic. A helical transmembrane segment spans residues 213-233 (VYHVLLILGLFAVLLACCASA). Residues 243 to 263 (YVDSLYFCFVTFSTIGFGDLV) constitute an intramembrane region (pore-forming). Thr-256, Ile-257, Gly-258, and Phe-259 together coordinate K(+). The tract at residues 256-261 (TIGFGD) is selectivity filter 2. A helical transmembrane segment spans residues 282-302 (LFILLGVCCIYSLFNVISILI). Over 303–430 (KQVLNWMLRK…NRLAETSASR (128 aa)) the chain is Cytoplasmic.

This sequence belongs to the two pore domain potassium channel (TC 1.A.1.8) family. As to quaternary structure, homodimer. Heterodimer with KCNK13. As to expression, highly expressed in most brain regions. Also expressed in other tissues such as lung, kidney, liver, stomach and spleen.

The protein resides in the cell membrane. Its subcellular location is the endoplasmic reticulum membrane. The enzyme catalyses K(+)(in) = K(+)(out). In terms of biological role, k(+) channel subunit that may homo- and heterodimerize to form functional channels with distinct regulatory and gating properties. Can heterodimerize with KCNK13 subunit to conduct K(+) outward rectifying currents at the plasma membrane. The homodimers are mainly retained in the endoplasmic reticulum compartment and may be targeted to the cell surface upon phosphorylation or other activation signals yet to be elucidated. In Rattus norvegicus (Rat), this protein is Potassium channel subfamily K member 12 (Kcnk12).